Reading from the N-terminus, the 299-residue chain is ATP phosphoribosyltransferase (299 aa).

The protein belongs to the ATP phosphoribosyltransferase family. Long subfamily. As to quaternary structure, equilibrium between an active dimeric form, an inactive hexameric form and higher aggregates. Interconversion between the various forms is largely reversible and is influenced by the natural substrates and inhibitors of the enzyme. Mg(2+) is required as a cofactor.

The protein localises to the cytoplasm. The enzyme catalyses 1-(5-phospho-beta-D-ribosyl)-ATP + diphosphate = 5-phospho-alpha-D-ribose 1-diphosphate + ATP. The protein operates within amino-acid biosynthesis; L-histidine biosynthesis; L-histidine from 5-phospho-alpha-D-ribose 1-diphosphate: step 1/9. Feedback inhibited by histidine. In terms of biological role, catalyzes the condensation of ATP and 5-phosphoribose 1-diphosphate to form N'-(5'-phosphoribosyl)-ATP (PR-ATP). Has a crucial role in the pathway because the rate of histidine biosynthesis seems to be controlled primarily by regulation of HisG enzymatic activity. The sequence is that of ATP phosphoribosyltransferase from Escherichia coli O7:K1 (strain IAI39 / ExPEC).